We begin with the raw amino-acid sequence, 246 residues long: Major prion protein (246 aa).

Residues 1-15 (MLVLFVATWSDLGLC) form the signal peptide. The interaction with GRB2, ERI3 and SYN1 stretch occupies residues 16 to 223 (KKRPKPGGWN…ESQAYYQRGS (208 aa)). Positions 18–102 (RPKPGGWNTG…HKPSKPKTSM (85 aa)) are disordered. Tandem repeats lie at residues 44–52 (PQGGGGWGQ), 53–60 (PHGGGWGQ), 61–68 (PHGGGWGQ), 69–76 (PHGGGWGQ), and 77–84 (PHGGGWGQ). The 5 X 8 AA tandem repeats of P-H-G-G-G-W-G-Q stretch occupies residues 44–84 (PQGGGGWGQPHGGGWGQPHGGGWGQPHGGGWGQPHGGGWGQ). Gly residues predominate over residues 45-88 (QGGGGWGQPHGGGWGQPHGGGWGQPHGGGWGQPHGGGWGQGGGT). Cu(2+)-binding residues include His-54, Gly-55, Gly-56, His-62, Gly-63, Gly-64, His-70, Gly-71, Gly-72, His-78, Gly-79, and Gly-80. Residues 91–102 (QWHKPSKPKTSM) are compositionally biased toward basic residues. A disulfide bridge links Cys-172 with Cys-207. 2 N-linked (GlcNAc...) asparagine glycosylation sites follow: Asn-174 and Asn-190. The GPI-anchor amidated serine moiety is linked to residue Ser-223. Residues 224–246 (SMVLFSSPPVILLISFLIFLIVG) constitute a propeptide, removed in mature form.

This sequence belongs to the prion family. In terms of assembly, monomer and homodimer. Has a tendency to aggregate into amyloid fibrils containing a cross-beta spine, formed by a steric zipper of superposed beta-strands. Soluble oligomers may represent an intermediate stage on the path to fibril formation. Copper binding may promote oligomerization. Interacts with GRB2, APP, ERI3/PRNPIP and SYN1. Mislocalized cytosolically exposed PrP interacts with MGRN1; this interaction alters MGRN1 subcellular location and causes lysosomal enlargement. Interacts with KIAA1191.

Its subcellular location is the cell membrane. It localises to the golgi apparatus. Its primary physiological function is unclear. Has cytoprotective activity against internal or environmental stresses. May play a role in neuronal development and synaptic plasticity. May be required for neuronal myelin sheath maintenance. May play a role in iron uptake and iron homeostasis. Soluble oligomers are toxic to cultured neuroblastoma cells and induce apoptosis (in vitro). Association with GPC1 (via its heparan sulfate chains) targets PRNP to lipid rafts. Also provides Cu(2+) or Zn(2+) for the ascorbate-mediated GPC1 deaminase degradation of its heparan sulfate side chains. This chain is Major prion protein (PRNP), found in Cercopithecus mona (Mona monkey).